A 342-amino-acid polypeptide reads, in one-letter code: Glycerol-1-phosphate dehydrogenase [NAD(P)+] (342 aa).

Residues 84–88 (GRPID) and 106–109 (TSAS) contribute to the NAD(+) site. Asp-111 lines the substrate pocket. Ser-115 is a binding site for NAD(+). Asp-160 contributes to the substrate binding site. Residues Asp-160 and His-241 each contribute to the Zn(2+) site. Residue His-245 coordinates substrate. Position 260 (His-260) interacts with Zn(2+).

This sequence belongs to the glycerol-1-phosphate dehydrogenase family. In terms of assembly, homodimer. Requires Zn(2+) as cofactor.

It is found in the cytoplasm. The enzyme catalyses sn-glycerol 1-phosphate + NAD(+) = dihydroxyacetone phosphate + NADH + H(+). It carries out the reaction sn-glycerol 1-phosphate + NADP(+) = dihydroxyacetone phosphate + NADPH + H(+). Its pathway is membrane lipid metabolism; glycerophospholipid metabolism. In terms of biological role, catalyzes the NAD(P)H-dependent reduction of dihydroxyacetonephosphate (DHAP or glycerone phosphate) to glycerol 1-phosphate (G1P). The G1P thus generated is used as the glycerophosphate backbone of phospholipids in the cellular membranes of Archaea. The sequence is that of Glycerol-1-phosphate dehydrogenase [NAD(P)+] from Pyrobaculum islandicum (strain DSM 4184 / JCM 9189 / GEO3).